A 362-amino-acid polypeptide reads, in one-letter code: MKAKKRIFFTGGGTGGHVFPGIAIISKLRELDTNIEFFWLGQKDSMEDKIIKEHAYIKFIAIPSGKLRRYFSLQNFTDFFKVIFGIIKSFFIIKKYKPQIIYATGGFVSSPPIIAASLLKVKSITHEMDLDPGLATKINSKFANKIHISFKESTKYFKNKNVLYTGSPIRKEFSNPNPNIIKNLTQDTKKPIISILGGSLGAEILNKLTLNIKNKIDAYFIHQCGRNLDATRENNYLRSQFFNAEEMASIIKFSNIIISRAGSGAIKEFANAGACVIFIPFVKGSRGDQIRNAKLLEEQNACFKIDEENLSESKIINIIKEILENKEKSNILRNNIKEFHNQDSSNLIANLLLKEFGKINAG.

UDP-N-acetyl-alpha-D-glucosamine contacts are provided by residues 14 to 16 (TGG), arginine 170, serine 199, and glutamine 289.

This sequence belongs to the glycosyltransferase 28 family. MurG subfamily.

The protein localises to the cell inner membrane. It catalyses the reaction di-trans,octa-cis-undecaprenyl diphospho-N-acetyl-alpha-D-muramoyl-L-alanyl-D-glutamyl-meso-2,6-diaminopimeloyl-D-alanyl-D-alanine + UDP-N-acetyl-alpha-D-glucosamine = di-trans,octa-cis-undecaprenyl diphospho-[N-acetyl-alpha-D-glucosaminyl-(1-&gt;4)]-N-acetyl-alpha-D-muramoyl-L-alanyl-D-glutamyl-meso-2,6-diaminopimeloyl-D-alanyl-D-alanine + UDP + H(+). Its pathway is cell wall biogenesis; peptidoglycan biosynthesis. Functionally, cell wall formation. Catalyzes the transfer of a GlcNAc subunit on undecaprenyl-pyrophosphoryl-MurNAc-pentapeptide (lipid intermediate I) to form undecaprenyl-pyrophosphoryl-MurNAc-(pentapeptide)GlcNAc (lipid intermediate II). This Borrelia turicatae (strain 91E135) protein is UDP-N-acetylglucosamine--N-acetylmuramyl-(pentapeptide) pyrophosphoryl-undecaprenol N-acetylglucosamine transferase.